Reading from the N-terminus, the 76-residue chain is Acyl carrier protein (76 aa).

Positions 1 to 76 (MDTFESVKAV…DVVAYIEANK (76 aa)) constitute a Carrier domain. Position 36 is an O-(pantetheine 4'-phosphoryl)serine (serine 36).

Belongs to the acyl carrier protein (ACP) family. In terms of processing, 4'-phosphopantetheine is transferred from CoA to a specific serine of apo-ACP by AcpS. This modification is essential for activity because fatty acids are bound in thioester linkage to the sulfhydryl of the prosthetic group.

The protein localises to the cytoplasm. It functions in the pathway lipid metabolism; fatty acid biosynthesis. Functionally, carrier of the growing fatty acid chain in fatty acid biosynthesis. The polypeptide is Acyl carrier protein (Helicobacter hepaticus (strain ATCC 51449 / 3B1)).